Consider the following 272-residue polypeptide: L-aminoadipate-semialdehyde dehydrogenase-phosphopantetheinyl transferase (272 aa).

The protein belongs to the P-Pant transferase superfamily. AcpS family.

It carries out the reaction apo-[ACP] + CoA = holo-[ACP] + adenosine 3',5'-bisphosphate + H(+). In terms of biological role, catalyzes the transfer of a 4'-phosphopantetheine moiety from coenzyme A to a serine residue of acceptor proteins, such as alpha-aminoadipate reductase. Necessary for alpha-aminoadipate reductase activity. The chain is L-aminoadipate-semialdehyde dehydrogenase-phosphopantetheinyl transferase from Saccharomyces cerevisiae (strain ATCC 204508 / S288c) (Baker's yeast).